Consider the following 164-residue polypeptide: Interferon gamma (164 aa).

The first 19 residues, 1–19, serve as a signal peptide directing secretion; sequence MTCQTYNLFVLSVIMIYYG. Residues asparagine 42 and asparagine 61 are each glycosylated (N-linked (GlcNAc...) asparagine).

The protein belongs to the type II (or gamma) interferon family. In terms of assembly, homodimer.

Its subcellular location is the secreted. Functionally, produced by lymphocytes activated by specific antigens or mitogens. IFN-gamma, in addition to having antiviral activity, has important immunoregulatory functions. It is a potent activator of macrophages, it has antiproliferative effects on transformed cells and it can potentiate the antiviral and antitumor effects of the type I interferons. The polypeptide is Interferon gamma (IFNG) (Phasianus colchicus colchicus (Black-necked pheasant)).